The following is a 359-amino-acid chain: Peptide chain release factor 1 (359 aa).

N5-methylglutamine is present on Gln-236.

It belongs to the prokaryotic/mitochondrial release factor family. Methylated by PrmC. Methylation increases the termination efficiency of RF1.

The protein localises to the cytoplasm. In terms of biological role, peptide chain release factor 1 directs the termination of translation in response to the peptide chain termination codons UAG and UAA. This Streptococcus pneumoniae (strain Taiwan19F-14) protein is Peptide chain release factor 1.